Here is a 79-residue protein sequence, read N- to C-terminus: Moronecidin (79 aa).

An N-terminal signal peptide occupies residues 1–22 (MKCATLFLVLSMVVLMAEPGDA). Residue G44 is modified to Glycine amide. The segment at 45–79 (GKAEQDQQDQQYQQEQQEQQAQQYQRFNRERAAFD) is disordered. Positions 47 to 79 (AEQDQQDQQYQQEQQEQQAQQYQRFNRERAAFD) are excised as a propeptide. Over residues 52–69 (QDQQYQQEQQEQQAQQYQ) the composition is skewed to low complexity.

Expressed in mast cells in gill, skin and gut, and in lining blood vessels in the viscera. Also in intestine, spleen, anterior kidney, and blood cells.

Its subcellular location is the secreted. Antimicrobial peptide with broad-spectrum activity against Gram-positive and Gram-negative bacteria as well as against a variety of fungi. Rapidly inactivates channel catfish herpesvirus (ED(50)=4 uM) and frog virus 3 (ED(50)=13 uM) over a wide temperature range. Seems to disrupt the membranes by adopting an alpha helical conformation and forming toroidal pores. Has hemolytic activity. The protein is Moronecidin of Morone saxatilis (Striped bass).